We begin with the raw amino-acid sequence, 206 residues long: Probable GTP-binding protein EngB (206 aa).

The region spanning 7–195 (DCDEVVLLGR…EEALQAIFSD (189 aa)) is the EngB-type G domain. Residues 15–22 (GRSNVGKS), 41–45 (GVTRS), 60–63 (DLPG), 140–143 (NKID), and 175–177 (ISA) each bind GTP. Residues serine 22 and threonine 43 each contribute to the Mg(2+) site.

This sequence belongs to the TRAFAC class TrmE-Era-EngA-EngB-Septin-like GTPase superfamily. EngB GTPase family. It depends on Mg(2+) as a cofactor.

Functionally, necessary for normal cell division and for the maintenance of normal septation. The sequence is that of Probable GTP-binding protein EngB from Haloquadratum walsbyi (strain DSM 16790 / HBSQ001).